The following is a 341-amino-acid chain: Very-long-chain 3-oxoacyl-CoA reductase (341 aa).

Residues 22–42 (AIYGFLLAGVAAFAAPIVSTI) form a helical membrane-spanning segment. The NADP(+) site is built by Leu-67, Asp-123, Asp-131, Asn-150, Tyr-217, Lys-221, Ile-250, and Thr-252. Residue Tyr-217 is the Proton donor of the active site. The active-site Lowers pKa of active site Tyr is Lys-221.

This sequence belongs to the short-chain dehydrogenases/reductases (SDR) family.

The protein localises to the endoplasmic reticulum membrane. The enzyme catalyses a very-long-chain (3R)-3-hydroxyacyl-CoA + NADP(+) = a very-long-chain 3-oxoacyl-CoA + NADPH + H(+). Its pathway is lipid metabolism; fatty acid biosynthesis. Its function is as follows. Component of the microsomal membrane bound fatty acid elongation system, which produces the 26-carbon very long-chain fatty acids (VLCFA) from palmitate. Catalyzes the reduction of the 3-ketoacyl-CoA intermediate that is formed in each cycle of fatty acid elongation. VLCFAs serve as precursors for ceramide and sphingolipids. This Phaeosphaeria nodorum (strain SN15 / ATCC MYA-4574 / FGSC 10173) (Glume blotch fungus) protein is Very-long-chain 3-oxoacyl-CoA reductase.